The chain runs to 295 residues: Nucleotide-binding protein BH3569 (295 aa).

14-21 (GMSGAGKT) serves as a coordination point for ATP. 65 to 68 (DLRG) contributes to the GTP binding site.

Belongs to the RapZ-like family.

In terms of biological role, displays ATPase and GTPase activities. The polypeptide is Nucleotide-binding protein BH3569 (Halalkalibacterium halodurans (strain ATCC BAA-125 / DSM 18197 / FERM 7344 / JCM 9153 / C-125) (Bacillus halodurans)).